The sequence spans 354 residues: Uroporphyrinogen decarboxylase (354 aa).

Substrate-binding positions include Arg-27–Arg-31, Asp-77, Tyr-154, Thr-209, and His-327.

The protein belongs to the uroporphyrinogen decarboxylase family. Homodimer.

It is found in the cytoplasm. It catalyses the reaction uroporphyrinogen III + 4 H(+) = coproporphyrinogen III + 4 CO2. It functions in the pathway porphyrin-containing compound metabolism; protoporphyrin-IX biosynthesis; coproporphyrinogen-III from 5-aminolevulinate: step 4/4. Functionally, catalyzes the decarboxylation of four acetate groups of uroporphyrinogen-III to yield coproporphyrinogen-III. In Escherichia fergusonii (strain ATCC 35469 / DSM 13698 / CCUG 18766 / IAM 14443 / JCM 21226 / LMG 7866 / NBRC 102419 / NCTC 12128 / CDC 0568-73), this protein is Uroporphyrinogen decarboxylase.